Reading from the N-terminus, the 102-residue chain is MFAIIETGGKQIKVEEGQEIFVEKLDVNEGDTFTFDKVLFVGGDSVKVGAPTVEGATVTATVNKQGRGKKITVFTYKRRKNSKRKKGHRQPYTKLTIDKINA.

The segment covering 80–91 has biased composition (basic residues); the sequence is KNSKRKKGHRQP. The segment at 80–102 is disordered; it reads KNSKRKKGHRQPYTKLTIDKINA.

This sequence belongs to the bacterial ribosomal protein bL21 family. Part of the 50S ribosomal subunit. Contacts protein L20.

In terms of biological role, this protein binds to 23S rRNA in the presence of protein L20. The protein is Large ribosomal subunit protein bL21 of Staphylococcus aureus (strain Mu3 / ATCC 700698).